Consider the following 281-residue polypeptide: MILTKAQYDEIAQCLVSVPPTRQSLRKLKQRFPSQSQATLLSIFSQEYQKHIKRTHAKHHTSEAIESYYQRYLNGVRKNGAAPVLLELANEVDYAPSLMARIILERFLQKHEEAPPSKSVINSMLRDPSQIPDGVLANQVYQCIVNDCCYGPLVDCIKHAIGHEHEVLLRDLLLEKNLSFLDEDQLRARGYDKTPDFILQVPVAVEGHIIHWIESKASFGDECSHHAYLHDQFWSYWNRFGPGLVIYWYGFIQELDCNRERGILLHACFPTDIVTLCHSVA.

It localises to the nucleus. Its subcellular location is the cytoplasm. Plays a role in erythroid cell differentiation. The chain is CDAN1-interacting nuclease 1 (CDIN1) from Bos taurus (Bovine).